The chain runs to 456 residues: Exodeoxyribonuclease 7 large subunit (456 aa).

It belongs to the XseA family. In terms of assembly, heterooligomer composed of large and small subunits.

Its subcellular location is the cytoplasm. It catalyses the reaction Exonucleolytic cleavage in either 5'- to 3'- or 3'- to 5'-direction to yield nucleoside 5'-phosphates.. Its function is as follows. Bidirectionally degrades single-stranded DNA into large acid-insoluble oligonucleotides, which are then degraded further into small acid-soluble oligonucleotides. This is Exodeoxyribonuclease 7 large subunit from Erwinia tasmaniensis (strain DSM 17950 / CFBP 7177 / CIP 109463 / NCPPB 4357 / Et1/99).